We begin with the raw amino-acid sequence, 208 residues long: Peptidyl-prolyl cis-trans isomerase FKBP13, chloroplastic (208 aa).

Intrachain disulfides connect C84-C96 and C185-C190. In terms of domain architecture, PPIase FKBP-type spans 109–208; it reads GQLIKAHYVG…LFDIEYIGKA (100 aa).

This sequence belongs to the FKBP-type PPIase family. Interacts in vitro with LTO1. The precursor, but not the mature form of the protein, interacts with the Rieske protein. In terms of tissue distribution, expressed in stems, leaves and developing flower buds, but not in roots.

The protein resides in the plastid. It is found in the chloroplast thylakoid lumen. The catalysed reaction is [protein]-peptidylproline (omega=180) = [protein]-peptidylproline (omega=0). Its activity is regulated as follows. PPIase activity is optimal in oxidized form (S-S) and minimal in reduced form (SH). Reduction of the oxidized form is mediated by thioredoxin (TRX-M). Functionally, PPIases accelerate the folding of proteins. It catalyzes the cis-trans isomerization of proline imidic peptide bonds in oligopeptides. Responsive of the major PPIase activity in the chloroplast thylakoid lumen. Regulates the accumulation of Rieske protein, an essential component of the photosynthetic electron transport chain. In Arabidopsis thaliana (Mouse-ear cress), this protein is Peptidyl-prolyl cis-trans isomerase FKBP13, chloroplastic.